The following is a 458-amino-acid chain: Bifunctional protein GlmU (458 aa).

The interval 1–231 (MSNRALSVVV…QTEVEGVNNR (231 aa)) is pyrophosphorylase. Residues 11–14 (LAAG), lysine 25, glutamine 78, 83–84 (GT), 105–107 (YGD), glycine 142, glutamate 156, asparagine 171, and asparagine 229 contribute to the UDP-N-acetyl-alpha-D-glucosamine site. Aspartate 107 serves as a coordination point for Mg(2+). Asparagine 229 provides a ligand contact to Mg(2+). The interval 232–252 (LQLARLERLFQREQAERLLLA) is linker. The tract at residues 253-458 (GVMLSDPDRF…ANWTRPVKKK (206 aa)) is N-acetyltransferase. The UDP-N-acetyl-alpha-D-glucosamine site is built by arginine 335 and lysine 353. Histidine 365 serves as the catalytic Proton acceptor. UDP-N-acetyl-alpha-D-glucosamine-binding residues include tyrosine 368 and asparagine 379. Residues alanine 382, 388–389 (NY), serine 407, alanine 425, and arginine 442 each bind acetyl-CoA.

It in the N-terminal section; belongs to the N-acetylglucosamine-1-phosphate uridyltransferase family. This sequence in the C-terminal section; belongs to the transferase hexapeptide repeat family. In terms of assembly, homotrimer. Mg(2+) serves as cofactor.

The protein localises to the cytoplasm. The enzyme catalyses alpha-D-glucosamine 1-phosphate + acetyl-CoA = N-acetyl-alpha-D-glucosamine 1-phosphate + CoA + H(+). It carries out the reaction N-acetyl-alpha-D-glucosamine 1-phosphate + UTP + H(+) = UDP-N-acetyl-alpha-D-glucosamine + diphosphate. It functions in the pathway nucleotide-sugar biosynthesis; UDP-N-acetyl-alpha-D-glucosamine biosynthesis; N-acetyl-alpha-D-glucosamine 1-phosphate from alpha-D-glucosamine 6-phosphate (route II): step 2/2. Its pathway is nucleotide-sugar biosynthesis; UDP-N-acetyl-alpha-D-glucosamine biosynthesis; UDP-N-acetyl-alpha-D-glucosamine from N-acetyl-alpha-D-glucosamine 1-phosphate: step 1/1. The protein operates within bacterial outer membrane biogenesis; LPS lipid A biosynthesis. Catalyzes the last two sequential reactions in the de novo biosynthetic pathway for UDP-N-acetylglucosamine (UDP-GlcNAc). The C-terminal domain catalyzes the transfer of acetyl group from acetyl coenzyme A to glucosamine-1-phosphate (GlcN-1-P) to produce N-acetylglucosamine-1-phosphate (GlcNAc-1-P), which is converted into UDP-GlcNAc by the transfer of uridine 5-monophosphate (from uridine 5-triphosphate), a reaction catalyzed by the N-terminal domain. The polypeptide is Bifunctional protein GlmU (Sodalis glossinidius (strain morsitans)).